Reading from the N-terminus, the 237-residue chain is Mitochondrial inner membrane protease atp23 (237 aa).

Residues 1-13 (MSDSQPCSTPSTR) show a composition bias toward polar residues. A disordered region spans residues 1-23 (MSDSQPCSTPSTRGKSDSGYIPG). His136 is a binding site for a divalent metal cation. Glu137 is a catalytic residue. His140 serves as a coordination point for a divalent metal cation.

Belongs to the peptidase M76 family.

It is found in the mitochondrion inner membrane. Its function is as follows. Has a dual role in the assembly of mitochondrial ATPase. Acts as a protease that removes N-terminal residues of mitochondrial ATPase CF(0) subunit 6 at the intermembrane space side. Also involved in the correct assembly of the membrane-embedded ATPase CF(0) particle, probably mediating association of subunit 6 with the subunit 9 ring. The chain is Mitochondrial inner membrane protease atp23 (atp23) from Aspergillus fumigatus (strain ATCC MYA-4609 / CBS 101355 / FGSC A1100 / Af293) (Neosartorya fumigata).